Here is a 285-residue protein sequence, read N- to C-terminus: Alpha-acetolactate decarboxylase (285 aa).

The first 25 residues, 1–25, serve as a signal peptide directing secretion; it reads MKKNIITSITSLALVAGLSLTAFAA.

This sequence belongs to the alpha-acetolactate decarboxylase family.

The catalysed reaction is (2S)-2-acetolactate + H(+) = (R)-acetoin + CO2. It participates in polyol metabolism; (R,R)-butane-2,3-diol biosynthesis; (R,R)-butane-2,3-diol from pyruvate: step 2/3. Functionally, converts acetolactate into acetoin, which can be excreted by the cells. This may be a mechanism for controlling the internal pH of cells in the stationary stage. This is Alpha-acetolactate decarboxylase (aldB) from Brevibacillus brevis (Bacillus brevis).